A 1155-amino-acid chain; its full sequence is ATP-dependent helicase/deoxyribonuclease subunit B (1155 aa).

A UvrD-like helicase ATP-binding domain is found at 1–278 (MSQLNAYIGR…FTKQERFENR (278 aa)). 9 to 16 (GRAGTGKS) is a binding site for ATP. In terms of domain architecture, UvrD-like helicase C-terminal spans 270 to 584 (TKQERFENRD…SIGSMDLAKV (315 aa)). 4 residues coordinate [4Fe-4S] cluster: Cys785, Cys1112, Cys1115, and Cys1121.

This sequence belongs to the helicase family. AddB/RexB type 1 subfamily. As to quaternary structure, heterodimer of AddA and AddB. Mg(2+) is required as a cofactor. Requires [4Fe-4S] cluster as cofactor.

Its function is as follows. The heterodimer acts as both an ATP-dependent DNA helicase and an ATP-dependent, dual-direction single-stranded exonuclease. Recognizes the chi site generating a DNA molecule suitable for the initiation of homologous recombination. The AddB subunit has 5' -&gt; 3' nuclease activity but not helicase activity. The chain is ATP-dependent helicase/deoxyribonuclease subunit B from Staphylococcus carnosus (strain TM300).